The sequence spans 395 residues: Cyclic AMP-responsive element-binding protein 3-like protein 4 (395 aa).

The Cytoplasmic segment spans residues 1–295; that stretch reads MDLGIPDLLD…QTSNKAAQTS (295 aa). The tract at residues 82–108 is disordered; it reads EASPGSDSGISEDPCHPDSPPAPRATS. The bZIP domain maps to 217-280; it reads VLKKVRRKIR…ISLVAQLRQL (64 aa). The tract at residues 219-248 is basic motif; the sequence is KKVRRKIRNKQSAQDSRRRKKEYIDGLESR. Positions 259–280 are leucine-zipper; the sequence is LQKKVQELERHNISLVAQLRQL. A helical; Signal-anchor for type II membrane protein transmembrane segment spans residues 296–316; the sequence is TCVLILLFSLALIILPSFSPF. The Lumenal portion of the chain corresponds to 317-395; sequence QSRPEAGSED…IRSVLHADEM (79 aa). Positions 355 to 395 are disordered; that stretch reads RLREPPGAKDANGSTRTLLEKMGGKPRPSGRIRSVLHADEM. Asparagine 366 carries N-linked (GlcNAc...) asparagine glycosylation.

This sequence belongs to the bZIP family. ATF subfamily. As to quaternary structure, binds DNA as a dimer. Post-translationally, N-glycosylated in the C-terminal region. Controlled by regulated intramembrane proteolysis (RIP). Following ER stress a fragment containing the cytoplasmic transcription factor domain is released by proteolysis. The cleavage seems to be performed sequentially by site-1 and site-2 proteases (PS1 and PS2). PS1 cleavage may be suppressed by a determinant in the C-terminal region. In terms of tissue distribution, according to PubMed:11830526, exclusively expressed in the prostate. Expressed in breast and prostate cancer cell lines. Expressed in prostatic luminal epithelial cells (at protein level). Expression is significantly more abundant in prostate cancer than in benign prostatic tissue (prostatic hyperplasia). According to PubMed:12111373, also expressed in brain, pancreas and skeletal muscle, and at lower levels in small intestine, testis, leukocyte and thymus.

Its subcellular location is the endoplasmic reticulum membrane. It localises to the golgi apparatus membrane. The protein resides in the nucleus. Its function is as follows. Transcriptional activator that may play a role in the unfolded protein response. Binds to the UPR element (UPRE) but not to CRE element. Preferentially binds DNA with to the consensus sequence 5'-T[GT]ACGT[GA][GT]-3' and has transcriptional activation activity from UPRE. Binds to NF-kappa-B site and has transcriptional activation activity from NF-kappa-B-containing regulatory elements. The protein is Cyclic AMP-responsive element-binding protein 3-like protein 4 (CREB3L4) of Homo sapiens (Human).